Consider the following 155-residue polypeptide: Fibroblast growth factor 1 (155 aa).

Position 2 is an N-acetylalanine (Ala2). Residues 2–15 constitute a propeptide that is removed on maturation; sequence AEGEITTFSALTER. Residue Asn33 coordinates heparin. The segment at 127 to 143 is heparin-binding; sequence KKNGSCKRGPRTHYGQK.

This sequence belongs to the heparin-binding growth factors family. Monomer. Homodimer. Interacts with FGFR1, FGFR2, FGFR3 and FGFR4. Affinity between fibroblast growth factors (FGFs) and their receptors is increased by heparan sulfate glycosaminoglycans that function as coreceptors. Found in a complex with FGFBP1, FGF1 and FGF2. Interacts with FGFBP1. Part of a Cu(2+)-dependent multiprotein aggregate containing FGF1, S100A13 and SYT1. Interacts with SYT1. Interacts with S100A13. Interacts with LRRC59. Interacts with CSNKA, CSNKB and FIBP. While binding with LRRC59, CSNKA and FIBP seem mutually exclusive, CSNKB and FIBP may cooperatively interact with FGF1. Forms a ternary complex with FGFR1 and ITGAV:ITGB3 and induces the recruitment of PTPN11 to the complex. Post-translationally, in the nucleus, phosphorylated by PKC/PRKCD.

It localises to the secreted. Its subcellular location is the cytoplasm. It is found in the cell cortex. The protein localises to the cytosol. The protein resides in the nucleus. Its function is as follows. Plays an important role in the regulation of cell survival, cell division, angiogenesis, cell differentiation and cell migration. Functions as a potent mitogen in vitro. Acts as a ligand for FGFR1 and integrins. Binds to FGFR1 in the presence of heparin leading to FGFR1 dimerization and activation via sequential autophosphorylation on tyrosine residues which act as docking sites for interacting proteins, leading to the activation of several signaling cascades. Binds to integrin ITGAV:ITGB3. Its binding to integrin, subsequent ternary complex formation with integrin and FGFR1, and the recruitment of PTPN11 to the complex are essential for FGF1 signaling. Induces the phosphorylation and activation of FGFR1, FRS2, MAPK3/ERK1, MAPK1/ERK2 and AKT1. Can induce angiogenesis. The protein is Fibroblast growth factor 1 (FGF1) of Mesocricetus auratus (Golden hamster).